A 481-amino-acid polypeptide reads, in one-letter code: Adenosylhomocysteinase (481 aa).

Substrate-binding residues include Thr-65, Asp-140, and Glu-200. Residue 201–203 (TTT) coordinates NAD(+). 2 residues coordinate substrate: Lys-230 and Asp-234. NAD(+) is bound by residues Asn-235, 264-269 (GYGDVG), Glu-287, Asn-322, 343-345 (IGH), and Asn-393.

It belongs to the adenosylhomocysteinase family. NAD(+) serves as cofactor.

Its subcellular location is the cytoplasm. The catalysed reaction is S-adenosyl-L-homocysteine + H2O = L-homocysteine + adenosine. It functions in the pathway amino-acid biosynthesis; L-homocysteine biosynthesis; L-homocysteine from S-adenosyl-L-homocysteine: step 1/1. In terms of biological role, may play a key role in the regulation of the intracellular concentration of adenosylhomocysteine. This Polynucleobacter asymbioticus (strain DSM 18221 / CIP 109841 / QLW-P1DMWA-1) (Polynucleobacter necessarius subsp. asymbioticus) protein is Adenosylhomocysteinase.